Consider the following 153-residue polypeptide: 6,7-dimethyl-8-ribityllumazine synthase (153 aa).

Residues Phe-22, 56–58 (AFE), and 80–82 (TVI) contribute to the 5-amino-6-(D-ribitylamino)uracil site. (2S)-2-hydroxy-3-oxobutyl phosphate is bound at residue 85–86 (ST). His-88 serves as the catalytic Proton donor. Phe-113 provides a ligand contact to 5-amino-6-(D-ribitylamino)uracil. Residue Arg-127 participates in (2S)-2-hydroxy-3-oxobutyl phosphate binding.

The protein belongs to the DMRL synthase family. In terms of assembly, forms an icosahedral capsid composed of 60 subunits, arranged as a dodecamer of pentamers.

The catalysed reaction is (2S)-2-hydroxy-3-oxobutyl phosphate + 5-amino-6-(D-ribitylamino)uracil = 6,7-dimethyl-8-(1-D-ribityl)lumazine + phosphate + 2 H2O + H(+). The protein operates within cofactor biosynthesis; riboflavin biosynthesis; riboflavin from 2-hydroxy-3-oxobutyl phosphate and 5-amino-6-(D-ribitylamino)uracil: step 1/2. Functionally, catalyzes the formation of 6,7-dimethyl-8-ribityllumazine by condensation of 5-amino-6-(D-ribitylamino)uracil with 3,4-dihydroxy-2-butanone 4-phosphate. This is the penultimate step in the biosynthesis of riboflavin. This is 6,7-dimethyl-8-ribityllumazine synthase from Actinobacillus pleuropneumoniae serotype 5b (strain L20).